A 66-amino-acid polypeptide reads, in one-letter code: DNA-directed RNA polymerase subunit Rpo10 (66 aa).

Residues C7, C10, C44, and C45 each contribute to the Zn(2+) site.

It belongs to the archaeal Rpo10/eukaryotic RPB10 RNA polymerase subunit family. As to quaternary structure, part of the RNA polymerase complex. The cofactor is Zn(2+).

It localises to the cytoplasm. The catalysed reaction is RNA(n) + a ribonucleoside 5'-triphosphate = RNA(n+1) + diphosphate. In terms of biological role, DNA-dependent RNA polymerase (RNAP) catalyzes the transcription of DNA into RNA using the four ribonucleoside triphosphates as substrates. This Pyrobaculum islandicum (strain DSM 4184 / JCM 9189 / GEO3) protein is DNA-directed RNA polymerase subunit Rpo10.